Here is a 1729-residue protein sequence, read N- to C-terminus: MSKIRRKVTVENTKTISESTSRRPSVFERLGPSTGSTTETQCRNWLKTGSCLYGNTCRFIHGPSPRGKGYSSNYRRSPERPTGDLRERMKNKRQDVDSESQKRNTEEPSSPVRKESSRGRHRDKEDIKIVKERTPESEEENVEWETNRDDSDNGDINYDYVHELSLEMKRQKIQRELMKLEQENMDKREEIIIQKEVSPEVVRSKLSPSPSLRKSSKSPKRKSSPKASSAGKKERKAAVVASPLLDQQRNSKGNQSKKKGPRTPSPPPPILEDIILGKKYKEKYKVKDRIEEKPRDGKDRGRDFEKQREKRDKPRSSSPGQHHSPLSSRHHSSSSQSGSSIQRHSPSPRRKRTPSPSYQRTLTPSLRRSASPYPTHCLSSPQRKQSPPRHRSPMREKGRHDHERTSQSHDRRHERREETRGKRDREKDTREERESEHDHRDDREPRDSRDRRDTRDRRELRDSRDMRDSREMRDYSRDAKESRDPRDSRSARDVHDYRDREARDAHARDVRDARDARDARDARDIRDVRDVRDVRDVRDVRDVRDVRDVRDVRDARDVRDVRDARDVRDVRDVRDGHRKEDVYQEEARSYGRNHLREESSRVELRNDSRNESRSEIRNDRMGRSRGRGPELPEKGSRGTRGSQMDSHSSGSNYHDSWETRSSYPERDRYPERDTRDPARDSSFERRHGERDRRDNRERDQRPSSPIRHQGRSEELERDERREERRIDRVDERRDDRVRDRDRDREREREREREREREREKERERELERERAREREREREKERERERERERDQRDRDHDREREREREREREKEREREREERERERERERERERERERERERERERERERERAREREKERERQREWEDKDKGRDDRREKREDIHVREDRIPRDSHEERKSKKRYRNEGSPSPRQSPKRRREHSPDSDTYHSGDDKNEKHRLLSQVVRPQESRSLSPSHLTEDRQGRWKEEDRKSERKESSRRYEEQELKEKLSCGDRQREQAESVDSSRVRAQDLLSHRQAEDRDRDGSDRAHDEKKKAKAPKKPVKKKKEEDVGVERGNLETHEDSQVFSPKKGQKKKNIEKKRKRSKGDSDVSDEEAAPQNKKKRGPRTPPLAIKEELADISTDKDGVLEDPLKKENTAFSDWSDEDVPDRTEGLEAEHTAATATPGSTPSPLSSLLPPPPPVAAASTAATALASSAVSATTSATSSSSAATSNTNGSEDSHRKCHRARGEKVEVSHVTLEDTPHRKLVDQKRSSSLGSNRSHRSHTSGRLRSPSNDSAHRSGDDQGSRKRVLHSGSRDREKTKSLEITGERKSRIDQLKRGEPSRSTSSDRQDSRSHSSRRSSPESDRQVHSRSGSFDSRDRLQERDRYEHDRERERDRRDPRQREWDREAEKEWPRTRDRDRLRERDRDRDRRRDLDRERERLISDPMERDRERERTFETSQLESGKRSEVKLESEHERDLEGSSRDSVALDKERMDRDLGSVQGFEDVSKAERTESLEGDDESKLDDAHSLGSGAGEGYEPISDDELDEILAGDAEKREDQQEEEKMPDPLDVIDVDWSGLMPKHPKEPREPGAALLKFTPGAVLLRVGISKKLAGSELFTKVKETCQQLVEKPKDADSLFEHELGALNMAALLRKEERASLLSDLGPCCKALCFRRDSAIRKQLVKNEKGTVKQAYTNTPMVDNELLRLSLRLFKKKATCHAPGQEKTEDGKLGPCSIQQELCVS.

Disordered stretches follow at residues 1-40 and 57-156; these read MSKI…TTET and CRFI…NGDI. Residues 10–23 show a composition bias toward polar residues; sequence VENTKTISESTSRR. The segment at 36–64 adopts a C3H1-type zinc-finger fold; it reads STTETQCRNWLKTGSCLYGNTCRFIHGPS. 2 positions are modified to phosphoserine: S64 and S77. The span at 76–136 shows a compositional bias: basic and acidic residues; it reads RSPERPTGDL…IKIVKERTPE (61 aa). Residues 162–196 adopt a coiled-coil conformation; that stretch reads HELSLEMKRQKIQRELMKLEQENMDKREEIIIQKE. Residue K179 forms a Glycyl lysine isopeptide (Lys-Gly) (interchain with G-Cter in SUMO2) linkage. Residues 182-193 are compositionally biased toward basic and acidic residues; that stretch reads QENMDKREEIII. Disordered stretches follow at residues 182 to 528 and 581 to 1527; these read QENM…IRDV and DVYQ…PISD. Phosphoserine is present on residues S198, S207, S209, and S211. Positions 204–213 are enriched in low complexity; that stretch reads SKLSPSPSLR. Basic residues predominate over residues 214-224; it reads KSSKSPKRKSS. S242 bears the Phosphoserine mark. The span at 245-254 shows a compositional bias: polar residues; sequence LDQQRNSKGN. Phosphothreonine is present on T263. The residue at position 265 (S265) is a Phosphoserine. Residues 283 to 315 show a composition bias toward basic and acidic residues; it reads KYKVKDRIEEKPRDGKDRGRDFEKQREKRDKPR. Residues S316, S318, S324, and S327 each carry the phosphoserine modification. The span at 321–345 shows a compositional bias: low complexity; sequence QHHSPLSSRHHSSSSQSGSSIQRHS. Phosphothreonine is present on residues T353 and T363. A compositionally biased stretch (polar residues) spans 358–368; it reads YQRTLTPSLRR. Residues S369, S371, and S380 each carry the phosphoserine modification. Basic and acidic residues-rich tracts occupy residues 393–528 and 581–636; these read PMRE…IRDV and DVYQ…EKGS. The span at 639 to 654 shows a compositional bias: polar residues; that stretch reads TRGSQMDSHSSGSNYH. Residues 655–701 show a composition bias toward basic and acidic residues; the sequence is DSWETRSSYPERDRYPERDTRDPARDSSFERRHGERDRRDNRERDQR. S704 is subject to Phosphoserine. Residues 706-865 are a coiled coil; sequence IRHQGRSEEL…KERERQREWE (160 aa). Residues 710 to 897 are compositionally biased toward basic and acidic residues; that stretch reads GRSEELERDE…IPRDSHEERK (188 aa). 9 positions are modified to phosphoserine: S907, S909, S913, S921, S924, S929, S949, S951, and S953. Basic and acidic residues predominate over residues 920–938; that stretch reads HSPDSDTYHSGDDKNEKHR. The span at 957-1035 shows a compositional bias: basic and acidic residues; sequence LTEDRQGRWK…GSDRAHDEKK (79 aa). At T958 the chain carries Phosphothreonine. A compositionally biased stretch (basic residues) spans 1036 to 1046; that stretch reads KAKAPKKPVKK. A compositionally biased stretch (basic and acidic residues) spans 1047–1065; it reads KKEEDVGVERGNLETHEDS. Phosphoserine is present on residues S1069, S1086, S1090, and S1093. Basic residues predominate over residues 1072 to 1086; it reads KGQKKKNIEKKRKRS. T1109 carries the post-translational modification Phosphothreonine. 2 stretches are compositionally biased toward basic and acidic residues: residues 1114-1137 and 1149-1159; these read IKEE…KKEN and PDRTEGLEAEH. Low complexity-rich tracts occupy residues 1160–1176 and 1184–1218; these read TAAT…LSSL and AAAS…TNGS. Residues 1228 to 1253 are compositionally biased toward basic and acidic residues; that stretch reads ARGEKVEVSHVTLEDTPHRKLVDQKR. 4 positions are modified to phosphoserine: S1256, S1259, S1273, and S1275. Positions 1278-1288 are enriched in basic and acidic residues; sequence SAHRSGDDQGS. S1295 is modified (phosphoserine). Composition is skewed to basic and acidic residues over residues 1296–1351 and 1359–1440; these read GSRD…DRQV and DSRD…ERTF. Residues S1427, S1443, S1447, S1467, S1470, S1499, and S1526 each carry the phosphoserine modification. Basic and acidic residues-rich tracts occupy residues 1447-1482 and 1490-1499; these read SGKR…DRDL and DVSKAERTES.

This sequence belongs to the ZC3H13 family. In terms of assembly, component of the WMM complex, a N6-methyltransferase complex composed of a catalytic subcomplex, named MAC, and of an associated subcomplex, named MACOM. The MAC subcomplex is composed of METTL3 and METTL14. The MACOM subcomplex is composed of WTAP, ZC3H13, CBLL1/HAKAI, VIRMA, and, in some cases of RBM15 (RBM15 or RBM15B). Also a component of a MACOM-like complex, named WTAP complex, composed of WTAP, ZC3H13, CBLL1/HAKAI, VIRMA, RBM15, BCLAF1 and THRAP3.

Its subcellular location is the nucleus speckle. It localises to the nucleus. The protein localises to the nucleoplasm. Associated component of the WMM complex, a complex that mediates N6-methyladenosine (m6A) methylation of RNAs, a modification that plays a role in the efficiency of mRNA splicing and RNA processing. Acts as a key regulator of m6A methylation by promoting m6A methylation of mRNAs at the 3'-UTR. Controls embryonic stem cells (ESCs) pluripotency via its role in m6A methylation. In the WMM complex, anchors component of the MACOM subcomplex in the nucleus. Also required for bridging WTAP to the RNA-binding component RBM15 (RBM15 or RBM15B). This Mus musculus (Mouse) protein is Zinc finger CCCH domain-containing protein 13.